A 362-amino-acid polypeptide reads, in one-letter code: Class I histocompatibility antigen, Gogo-B*0103 alpha chain (362 aa).

The first 24 residues, 1 to 24 (MRVTAPRTLLLLLSAALALTETWA), serve as a signal peptide directing secretion. An alpha-1 region spans residues 25–114 (GSHSMRYFDT…ALRYYNQSEA (90 aa)). Residues 25 to 308 (GSHSMRYFDT…EPSSQSTIPI (284 aa)) lie on the Extracellular side of the membrane. Asparagine 110 carries N-linked (GlcNAc...) asparagine glycosylation. The segment at 115 to 206 (GSHTIQWMYG…ENGRETLQRA (92 aa)) is alpha-2. Disulfide bonds link cysteine 125–cysteine 188 and cysteine 227–cysteine 283. Residues 207 to 298 (DTPKTHVTHH…GLPKPLTLRW (92 aa)) are alpha-3. An Ig-like C1-type domain is found at 209–295 (PKTHVTHHPI…QHEGLPKPLT (87 aa)). The interval 299–308 (EPSSQSTIPI) is connecting peptide. A helical transmembrane segment spans residues 309–332 (VGIVAGLAVLAVVVIGAVVTAVIC). Residues 333–362 (RRKSSGGKGGSYSQAASSDSAQGSDVSLTA) lie on the Cytoplasmic side of the membrane. Residues 335–362 (KSSGGKGGSYSQAASSDSAQGSDVSLTA) form a disordered region. A compositionally biased stretch (low complexity) spans 343-362 (SYSQAASSDSAQGSDVSLTA).

Belongs to the MHC class I family. As to quaternary structure, heterodimer of an alpha chain and a beta chain (beta-2-microglobulin).

It localises to the membrane. Involved in the presentation of foreign antigens to the immune system. The polypeptide is Class I histocompatibility antigen, Gogo-B*0103 alpha chain (Gorilla gorilla gorilla (Western lowland gorilla)).